Consider the following 657-residue polypeptide: Glycogen debranching enzyme (657 aa).

The active-site Nucleophile is the Asp336. The Proton donor role is filled by Glu371. Positions 458-467 are enriched in basic and acidic residues; the sequence is NEANGEENRD. Residues 458 to 479 form a disordered region; sequence NEANGEENRDGTNNNYSNNHGK.

It belongs to the glycosyl hydrolase 13 family.

It catalyses the reaction Hydrolysis of (1-&gt;6)-alpha-D-glucosidic linkages to branches with degrees of polymerization of three or four glucose residues in limit dextrin.. It participates in glycan degradation; glycogen degradation. Removes maltotriose and maltotetraose chains that are attached by 1,6-alpha-linkage to the limit dextrin main chain, generating a debranched limit dextrin. This is Glycogen debranching enzyme from Escherichia coli (strain SE11).